The chain runs to 386 residues: GTPase Obg (386 aa).

In terms of domain architecture, Obg spans 1-159; that stretch reads MKFIDEARIE…RTLKLELKVL (159 aa). One can recognise an OBG-type G domain in the interval 160–348; that stretch reads ADVGLLGMPN…LTFAIMSYLD (189 aa). Residues 166–173, 191–195, 213–216, 284–287, and 329–331 each bind GTP; these read GMPNAGKS, FTTLH, DIPG, NKVD, and SAL. Residues serine 173 and threonine 193 each contribute to the Mg(2+) site.

It belongs to the TRAFAC class OBG-HflX-like GTPase superfamily. OBG GTPase family. Monomer. The cofactor is Mg(2+).

The protein localises to the cytoplasm. Its function is as follows. An essential GTPase which binds GTP, GDP and possibly (p)ppGpp with moderate affinity, with high nucleotide exchange rates and a fairly low GTP hydrolysis rate. Plays a role in control of the cell cycle, stress response, ribosome biogenesis and in those bacteria that undergo differentiation, in morphogenesis control. This is GTPase Obg from Chromobacterium violaceum (strain ATCC 12472 / DSM 30191 / JCM 1249 / CCUG 213 / NBRC 12614 / NCIMB 9131 / NCTC 9757 / MK).